Here is a 948-residue protein sequence, read N- to C-terminus: Putative helicase 009L (948 aa).

A Helicase ATP-binding domain is found at 64 to 243 (LSEDTPYREL…ADVLNLILPQ (180 aa)). 77 to 84 (HAPGTGKT) contributes to the ATP binding site. The DEAH box signature appears at 187–190 (DEVH). The region spanning 371–554 (VKYDYLVRVA…AVERILMTSA (184 aa)) is the Helicase C-terminal domain.

This is Putative helicase 009L from Frog virus 3 (isolate Goorha) (FV-3).